Consider the following 331-residue polypeptide: DNA polymerase IV (331 aa).

A UmuC domain is found at 1–174; that stretch reads FFAAVEMRDN…LPLAKIPGVG (174 aa). Asp92 provides a ligand contact to Mg(2+). Glu93 is an active-site residue.

This sequence belongs to the DNA polymerase type-Y family. As to quaternary structure, monomer. Mg(2+) is required as a cofactor.

It localises to the cytoplasm. The enzyme catalyses DNA(n) + a 2'-deoxyribonucleoside 5'-triphosphate = DNA(n+1) + diphosphate. Functionally, poorly processive, error-prone DNA polymerase involved in untargeted mutagenesis. Copies undamaged DNA at stalled replication forks, which arise in vivo from mismatched or misaligned primer ends. These misaligned primers can be extended by PolIV. Exhibits no 3'-5' exonuclease (proofreading) activity. May be involved in translesional synthesis, in conjunction with the beta clamp from PolIII. The chain is DNA polymerase IV from Escherichia fergusonii.